We begin with the raw amino-acid sequence, 842 residues long: Translation initiation factor IF-2 (842 aa).

Disordered stretches follow at residues Glu-42–Ser-91 and Leu-139–Pro-253. Composition is skewed to basic and acidic residues over residues Ile-176–His-190 and Ser-199–Arg-214. A tr-type G domain is found at Pro-340 to Lys-509. The segment at Gly-349–Thr-356 is G1. A GTP-binding site is contributed by Gly-349 to Thr-356. Residues Gly-374–His-378 form a G2 region. The tract at residues Asp-395 to Gly-398 is G3. GTP contacts are provided by residues Asp-395–His-399 and Asn-449–Asp-452. The tract at residues Asn-449 to Asp-452 is G4. The G5 stretch occupies residues Ser-485–Lys-487.

Belongs to the TRAFAC class translation factor GTPase superfamily. Classic translation factor GTPase family. IF-2 subfamily.

The protein resides in the cytoplasm. One of the essential components for the initiation of protein synthesis. Protects formylmethionyl-tRNA from spontaneous hydrolysis and promotes its binding to the 30S ribosomal subunits. Also involved in the hydrolysis of GTP during the formation of the 70S ribosomal complex. The chain is Translation initiation factor IF-2 from Bartonella tribocorum (strain CIP 105476 / IBS 506).